A 61-amino-acid chain; its full sequence is Alpha-conotoxine-like Am1.4 (61 aa).

An N-terminal signal peptide occupies residues 1-21 (MGMRMMFTVFLLVVLATTVVS). Positions 22–44 (FMSGRASHGRNAAASDLIALTIK) are excised as a propeptide.

The protein belongs to the conotoxin A superfamily. Is not hydroxylated. In terms of processing, contains 2 disulfide bonds. Expressed by the venom duct.

It is found in the secreted. Functionally, alpha-conotoxins act on postsynaptic membranes, they bind to the nicotinic acetylcholine receptors (nAChR) and thus inhibit them. This is Alpha-conotoxine-like Am1.4 from Conus amadis (Amadis cone).